Reading from the N-terminus, the 101-residue chain is CRISPR-associated endoribonuclease Cas2 (101 aa).

Asp8 serves as a coordination point for Mg(2+).

Belongs to the CRISPR-associated endoribonuclease Cas2 protein family. In terms of assembly, homodimer, forms a heterotetramer with a Cas1 homodimer. The cofactor is Mg(2+).

Functionally, CRISPR (clustered regularly interspaced short palindromic repeat), is an adaptive immune system that provides protection against mobile genetic elements (viruses, transposable elements and conjugative plasmids). CRISPR clusters contain sequences complementary to antecedent mobile elements and target invading nucleic acids. CRISPR clusters are transcribed and processed into CRISPR RNA (crRNA). Functions as a ssRNA-specific endoribonuclease. Involved in the integration of spacer DNA into the CRISPR cassette. The protein is CRISPR-associated endoribonuclease Cas2 of Treponema denticola (strain ATCC 35405 / DSM 14222 / CIP 103919 / JCM 8153 / KCTC 15104).